The sequence spans 445 residues: Ribulose bisphosphate carboxylase large chain (445 aa).

The substrate site is built by N89 and T139. K141 (proton acceptor) is an active-site residue. A substrate-binding site is contributed by K143. Mg(2+)-binding residues include K167, D169, and E170. K167 carries the N6-carboxylysine modification. The active-site Proton acceptor is H260. 3 residues coordinate substrate: R261, H293, and S345.

It belongs to the RuBisCO large chain family. Type I subfamily. Heterohexadecamer of 8 large chains and 8 small chains; disulfide-linked. The disulfide link is formed within the large subunit homodimers. Mg(2+) is required as a cofactor. Post-translationally, the disulfide bond which can form in the large chain dimeric partners within the hexadecamer appears to be associated with oxidative stress and protein turnover.

Its subcellular location is the plastid. The protein localises to the chloroplast. The catalysed reaction is 2 (2R)-3-phosphoglycerate + 2 H(+) = D-ribulose 1,5-bisphosphate + CO2 + H2O. It carries out the reaction D-ribulose 1,5-bisphosphate + O2 = 2-phosphoglycolate + (2R)-3-phosphoglycerate + 2 H(+). In terms of biological role, ruBisCO catalyzes two reactions: the carboxylation of D-ribulose 1,5-bisphosphate, the primary event in carbon dioxide fixation, as well as the oxidative fragmentation of the pentose substrate in the photorespiration process. Both reactions occur simultaneously and in competition at the same active site. The chain is Ribulose bisphosphate carboxylase large chain from Callicarpa dichotoma (Purple beautyberry).